Reading from the N-terminus, the 206-residue chain is Ribosomal RNA small subunit methyltransferase G (206 aa).

S-adenosyl-L-methionine-binding positions include Gly-73, Leu-78, 124–125 (VE), and Arg-139.

Belongs to the methyltransferase superfamily. RNA methyltransferase RsmG family.

It localises to the cytoplasm. It carries out the reaction guanosine(527) in 16S rRNA + S-adenosyl-L-methionine = N(7)-methylguanosine(527) in 16S rRNA + S-adenosyl-L-homocysteine. Functionally, specifically methylates the N7 position of guanine in position 527 of 16S rRNA. This is Ribosomal RNA small subunit methyltransferase G from Photobacterium profundum (strain SS9).